A 258-amino-acid polypeptide reads, in one-letter code: UPF0758 protein BamMC406_2419 (258 aa).

The disordered stretch occupies residues 13-42 (CRDPADAPAAPARHTGPARPRKRRPRNWKP). Residues 31–42 (RPRKRRPRNWKP) are compositionally biased toward basic residues. An MPN domain is found at 136 to 258 (QIDSPGAVED…TFSFARAGWL (123 aa)). Zn(2+) is bound by residues His-207, His-209, and Asp-220. A JAMM motif motif is present at residues 207–220 (HNHPSGAVQPSAED).

The protein belongs to the UPF0758 family.

This is UPF0758 protein BamMC406_2419 from Burkholderia ambifaria (strain MC40-6).